A 177-amino-acid polypeptide reads, in one-letter code: Putative pre-16S rRNA nuclease (177 aa).

Residues 1–20 (MVATQQGPDRPGIDDPGRGR) are disordered.

This sequence belongs to the YqgF nuclease family.

It localises to the cytoplasm. Could be a nuclease involved in processing of the 5'-end of pre-16S rRNA. The protein is Putative pre-16S rRNA nuclease of Rhodococcus erythropolis (strain PR4 / NBRC 100887).